We begin with the raw amino-acid sequence, 752 residues long: Pre-mRNA-processing factor 39 (752 aa).

The interval 1–148 (MEDSGESMTG…DPAAPQEPEL (148 aa)) is disordered. Positions 28-42 (TTGTDDVTGLSTSDL) are enriched in polar residues. 3 stretches are compositionally biased toward low complexity: residues 43–56 (TTEQ…QTQP), 76–94 (QSAS…PPES), and 133–148 (EPAA…EPEL). HAT repeat units follow at residues 180–212 (NHLL…IERK), 214–246 (GYIQ…FLRE), and 254–289 (EAES…WETE). The disordered stretch occupies residues 347–374 (NKPSGDEDAETEAPGEELPPGTEDLPDP). Residues 352 to 361 (DEDAETEAPG) are compositionally biased toward acidic residues. HAT repeat units lie at residues 408-440 (AFEE…FELE) and 442-474 (GTPE…YLES). Over residues 678–699 (SFKRKAENGSEEPDAKRQRTDD) the composition is skewed to basic and acidic residues. The segment at 678–703 (SFKRKAENGSEEPDAKRQRTDDQSVA) is disordered. One copy of the HAT 6 repeat lies at 700–731 (QSVASGQMMDMQANHAGYNYNNWYQYNSWGSQ).

It belongs to the PRP39 family.

Its subcellular location is the nucleus. Involved in pre-mRNA splicing. The polypeptide is Pre-mRNA-processing factor 39 (prpf39) (Danio rerio (Zebrafish)).